The primary structure comprises 227 residues: uncharacterized protein (227 aa).

Transmembrane regions (helical) follow at residues 27–47 (AVLP…FPLL), 63–83 (PAPP…AVLG), 126–146 (TIIL…IAGV), 153–173 (VFLG…TLAG), and 186–206 (FQLI…VSAA).

Belongs to the DedA family.

The protein localises to the cell membrane. This is an uncharacterized protein from Mycobacterium tuberculosis (strain CDC 1551 / Oshkosh).